A 153-amino-acid chain; its full sequence is Actin-related protein 2/3 complex subunit 5-like protein (153 aa).

The residue at position 64 (serine 64) is a Phosphoserine.

Belongs to the ARPC5 family. May be a component of the Arp2/3 complex in which it may replace ARPC5.

The protein localises to the cytoplasm. The protein resides in the cytoskeleton. Its function is as follows. May function as component of the Arp2/3 complex which is involved in regulation of actin polymerization and together with an activating nucleation-promoting factor (NPF) mediates the formation of branched actin networks. The polypeptide is Actin-related protein 2/3 complex subunit 5-like protein (Arpc5l) (Mus musculus (Mouse)).